The chain runs to 518 residues: Cytokinin hydroxylase (518 aa).

Residues 1 to 21 (MLLTILKSLLVIFVTTILRVL) traverse the membrane as a helical segment. Cys464 provides a ligand contact to heme.

The protein belongs to the cytochrome P450 family. Requires heme as cofactor. As to expression, expressed in roots and flowers.

Its subcellular location is the membrane. The catalysed reaction is N(6)-(dimethylallyl)adenosine 5'-phosphate + NADPH + O2 + H(+) = 9-ribosyl-trans-zeatin 5'-phosphate + NADP(+) + H2O. The enzyme catalyses N(6)-(dimethylallyl)adenosine 5'-diphosphate + NADPH + O2 + H(+) = 9-ribosyl-trans-zeatin 5'-diphosphate + NADP(+) + H2O. It carries out the reaction N(6)-(dimethylallyl)adenosine 5'-triphosphate + NADPH + O2 + H(+) = 9-ribosyl-trans-zeatin 5'-triphosphate + NADP(+) + H2O. Its function is as follows. Cytokinin hydroxylase that catalyzes the biosynthesis of trans-zeatin via the isopentenyladenine riboside 5'-monophosphate (iPRMP)-dependent pathway. Can use isopentenyladenosine-5'-monophosphate, isopentenyladenosine-5'-diphosphate and isopentenyladenosine-5'-triphosphate as substrate. This Arabidopsis thaliana (Mouse-ear cress) protein is Cytokinin hydroxylase (CYP735A1).